We begin with the raw amino-acid sequence, 343 residues long: Delta(1)-pyrroline-2-carboxylate/Delta(1)-piperideine-2-carboxylate reductase (343 aa).

Residue serine 53 is the Charge relay system of the active site. Residue histidine 54 is the Proton donor of the active site. Arginine 58 is a substrate binding site. 126–130 (HFAAL) provides a ligand contact to NADP(+). Position 166 (threonine 166) interacts with substrate. Residue 184–186 (DLA) coordinates NADP(+). Substrate is bound at residue 192–193 (HG). The Charge relay system role is filled by aspartate 194. Residues 236-237 (HK) and 309-315 (RLPGDRR) contribute to the NADP(+) site.

It belongs to the LDH2/MDH2 oxidoreductase family. Homodimer.

The enzyme catalyses L-pipecolate + NADP(+) = Delta(1)-piperideine-2-carboxylate + NADPH + H(+). The catalysed reaction is L-proline + NADP(+) = 1-pyrroline-2-carboxylate + NADPH + H(+). It carries out the reaction N-methyl-L-alanine + NADP(+) + H2O = methylamine + pyruvate + NADPH + H(+). With respect to regulation, is inhibited by the substrate analog pyrrole-2-carboxylate, and by 2-picolinate. Its function is as follows. Catalyzes the reduction of both Delta(1)-pyrroline-2-carboxylate (Pyr2C) and Delta(1)-piperideine-2-carboxylate (Pip2C) to L-proline and L-pipecolate, respectively, using NADPH as the electron donor. Can catalyze the reverse oxidation reactions, albeit at a much lower rate. Is also able to catalyze in vitro the NADPH-dependent formation of N-methylalanine from pyruvate and N-methylamine; can act on other alpha-keto acids and specifically uses methylamine and not ammonia for these reductive amination reactions. Can use NADH instead of NADPH, although with much less efficiency. This chain is Delta(1)-pyrroline-2-carboxylate/Delta(1)-piperideine-2-carboxylate reductase, found in Pseudomonas syringae pv. tomato.